A 488-amino-acid chain; its full sequence is Phenylalanine--tRNA ligase alpha subunit (488 aa).

L-phenylalanine contacts are provided by residues Thr332, 371–373 (QLD), and Phe410. Glu412 contacts Mg(2+). Residue Phe435 participates in L-phenylalanine binding.

Belongs to the class-II aminoacyl-tRNA synthetase family. Phe-tRNA synthetase alpha subunit type 2 subfamily. In terms of assembly, tetramer of two alpha and two beta subunits. Requires Mg(2+) as cofactor.

Its subcellular location is the cytoplasm. The catalysed reaction is tRNA(Phe) + L-phenylalanine + ATP = L-phenylalanyl-tRNA(Phe) + AMP + diphosphate + H(+). This chain is Phenylalanine--tRNA ligase alpha subunit, found in Aeropyrum pernix (strain ATCC 700893 / DSM 11879 / JCM 9820 / NBRC 100138 / K1).